A 451-amino-acid polypeptide reads, in one-letter code: Methylenetetrahydrofolate--tRNA-(uracil-5-)-methyltransferase TrmFO (451 aa).

FAD is bound at residue 10-15 (GGGLAG).

The protein belongs to the MnmG family. TrmFO subfamily. FAD serves as cofactor.

It is found in the cytoplasm. The enzyme catalyses uridine(54) in tRNA + (6R)-5,10-methylene-5,6,7,8-tetrahydrofolate + NADH + H(+) = 5-methyluridine(54) in tRNA + (6S)-5,6,7,8-tetrahydrofolate + NAD(+). It carries out the reaction uridine(54) in tRNA + (6R)-5,10-methylene-5,6,7,8-tetrahydrofolate + NADPH + H(+) = 5-methyluridine(54) in tRNA + (6S)-5,6,7,8-tetrahydrofolate + NADP(+). Functionally, catalyzes the folate-dependent formation of 5-methyl-uridine at position 54 (M-5-U54) in all tRNAs. In Anaeromyxobacter sp. (strain Fw109-5), this protein is Methylenetetrahydrofolate--tRNA-(uracil-5-)-methyltransferase TrmFO.